Reading from the N-terminus, the 517-residue chain is GMP synthase [glutamine-hydrolyzing] (517 aa).

Residues 9 to 199 enclose the Glutamine amidotransferase type-1 domain; it reads RILILDFGSQ…VLNVCGCEGL (191 aa). Residue C86 is the Nucleophile of the active site. Residues H173 and E175 contribute to the active site. Residues 200 to 392 enclose the GMPS ATP-PPase domain; the sequence is WTSASIIEDA…LGLPYNMLYR (193 aa). Residue 227 to 233 participates in ATP binding; that stretch reads SGGVDSS.

Homodimer.

It carries out the reaction XMP + L-glutamine + ATP + H2O = GMP + L-glutamate + AMP + diphosphate + 2 H(+). It participates in purine metabolism; GMP biosynthesis; GMP from XMP (L-Gln route): step 1/1. Its function is as follows. Catalyzes the synthesis of GMP from XMP. The sequence is that of GMP synthase [glutamine-hydrolyzing] from Aliivibrio salmonicida (strain LFI1238) (Vibrio salmonicida (strain LFI1238)).